The chain runs to 139 residues: Putative nickel-responsive regulator (139 aa).

Ni(2+) is bound by residues H79, H90, H92, and C98.

The protein belongs to the transcriptional regulatory CopG/NikR family. The cofactor is Ni(2+).

Its function is as follows. Transcriptional regulator. The sequence is that of Putative nickel-responsive regulator from Nitratidesulfovibrio vulgaris (strain ATCC 29579 / DSM 644 / CCUG 34227 / NCIMB 8303 / VKM B-1760 / Hildenborough) (Desulfovibrio vulgaris).